A 378-amino-acid polypeptide reads, in one-letter code: Ribosomal RNA large subunit methyltransferase G (378 aa).

This sequence belongs to the methyltransferase superfamily. RlmG family.

The protein resides in the cytoplasm. It carries out the reaction guanosine(1835) in 23S rRNA + S-adenosyl-L-methionine = N(2)-methylguanosine(1835) in 23S rRNA + S-adenosyl-L-homocysteine + H(+). In terms of biological role, specifically methylates the guanine in position 1835 (m2G1835) of 23S rRNA. This Escherichia coli O9:H4 (strain HS) protein is Ribosomal RNA large subunit methyltransferase G.